The following is a 109-amino-acid chain: Guanylin (109 aa).

The N-terminal stretch at 1-21 (MNTFLFPTLCLLGVWAALAGG) is a signal peptide. The propeptide occupies 22–94 (VTVKDGEFSF…LERLETIAQD (73 aa)). 3 disulfide bridges follow: Cys-63-Cys-76, Cys-98-Cys-106, and Cys-101-Cys-109.

This sequence belongs to the guanylin family.

It is found in the secreted. In terms of biological role, endogenous activator of intestinal guanylate cyclase. It stimulates this enzyme through the same receptor binding region as the heat-stable enterotoxins. This Sus scrofa (Pig) protein is Guanylin (GUCA2A).